A 307-amino-acid polypeptide reads, in one-letter code: Delta-9 acyl-lipid desaturase 2 (307 aa).

Residues 1 to 17 (MSVTSTVEENHQKNPST) are compositionally biased toward polar residues. The tract at residues 1–21 (MSVTSTVEENHQKNPSTPAAV) is disordered. The chain crosses the membrane as a helical span at residues 53 to 73 (LALLAPFYFTWSALWVTFLFY). Positions 85 and 90 each coordinate Fe cation. The Histidine box-1 signature appears at 85 to 90 (HRNLAH). Residues 99–119 (LEYLLAYCALLAIQGDPIDWV) form a helical membrane-spanning segment. Residues histidine 122, histidine 125, and histidine 126 each contribute to the Fe cation site. Residues 122 to 126 (HRYHH) carry the Histidine box-2 motif. The next 2 helical transmembrane spans lie at 182–202 (VLFH…MSFV) and 204–224 (WGMG…NSLC). Positions 225, 254, 257, and 258 each coordinate Fe cation. The Histidine box-3 motif lies at 254–258 (HNNHH).

Belongs to the fatty acid desaturase type 1 family. It depends on Fe cation as a cofactor. As to expression, strongly expressed in flowers, roots, leaves, seedpods, and inflorescence meristems.

Its subcellular location is the endoplasmic reticulum membrane. It carries out the reaction a 1-hexacosanoyl-2-acyl-phosphoglycerolipid + 2 Fe(II)-[cytochrome b5] + O2 + 2 H(+) = a 1-[(17Z)-hexacos-17-enoyl]-2-acyl-phosphoglycerolipid + 2 Fe(III)-[cytochrome b5] + 2 H2O. The catalysed reaction is a 1-tetracosanoyl-2-acyl-phosphoglycerolipid + 2 Fe(II)-[cytochrome b5] + O2 + 2 H(+) = a 1-[(15Z)-tetracos-15-enoyl]-2-acyl-phosphoglycerolipid + 2 Fe(III)-[cytochrome b5] + 2 H2O. Its pathway is lipid metabolism; polyunsaturated fatty acid biosynthesis. Functionally, involved in delta-9 desaturation of fatty acids. Plays a role in the production of very-long-chain monounsaturated fatty acids (VLCMUFAs) in seed lipids and in membrane phospholipids and sphingolipids. Acts as C-16:0 desaturase for monogalactosyl diacylglycerol (MGDG) and phosphatidylglycerol (PG). Is an essential component for cold adaptation. Is essential to adjust the acyl composition of organelle membrane lipid composition in response to cold stress. The chain is Delta-9 acyl-lipid desaturase 2 from Arabidopsis thaliana (Mouse-ear cress).